Consider the following 230-residue polypeptide: Flagellar L-ring protein (230 aa).

Positions 1–18 (MNRLNIAVSCLATALLFG) are cleaved as a signal peptide. Cys19 carries the N-palmitoyl cysteine lipid modification. Cys19 carries the S-diacylglycerol cysteine lipid modification.

The protein belongs to the FlgH family. As to quaternary structure, the basal body constitutes a major portion of the flagellar organelle and consists of four rings (L,P,S, and M) mounted on a central rod.

It localises to the cell outer membrane. The protein localises to the bacterial flagellum basal body. In terms of biological role, assembles around the rod to form the L-ring and probably protects the motor/basal body from shearing forces during rotation. In Legionella pneumophila (strain Corby), this protein is Flagellar L-ring protein.